The sequence spans 680 residues: DNA-directed RNA polymerase subunit beta' (680 aa).

4 residues coordinate Zn(2+): Cys69, Cys71, Cys87, and Cys90. Residues Asp489, Asp491, and Asp493 each contribute to the Mg(2+) site.

Belongs to the RNA polymerase beta' chain family. RpoC1 subfamily. In plastids the minimal PEP RNA polymerase catalytic core is composed of four subunits: alpha, beta, beta', and beta''. When a (nuclear-encoded) sigma factor is associated with the core the holoenzyme is formed, which can initiate transcription. The cofactor is Mg(2+). It depends on Zn(2+) as a cofactor.

It is found in the plastid. The protein resides in the chloroplast. The enzyme catalyses RNA(n) + a ribonucleoside 5'-triphosphate = RNA(n+1) + diphosphate. In terms of biological role, DNA-dependent RNA polymerase catalyzes the transcription of DNA into RNA using the four ribonucleoside triphosphates as substrates. This is DNA-directed RNA polymerase subunit beta' from Arabis hirsuta (Hairy rock-cress).